We begin with the raw amino-acid sequence, 252 residues long: Triosephosphate isomerase (252 aa).

Substrate is bound at residue 10–12; that stretch reads NWK. The active-site Electrophile is H96. The Proton acceptor role is filled by E168. Substrate-binding positions include G174, S214, and 235–236; that span reads GG.

Belongs to the triosephosphate isomerase family. Homodimer.

The protein localises to the cytoplasm. It carries out the reaction D-glyceraldehyde 3-phosphate = dihydroxyacetone phosphate. It functions in the pathway carbohydrate biosynthesis; gluconeogenesis. The protein operates within carbohydrate degradation; glycolysis; D-glyceraldehyde 3-phosphate from glycerone phosphate: step 1/1. In terms of biological role, involved in the gluconeogenesis. Catalyzes stereospecifically the conversion of dihydroxyacetone phosphate (DHAP) to D-glyceraldehyde-3-phosphate (G3P). The protein is Triosephosphate isomerase of Lactococcus lactis subsp. cremoris (strain MG1363).